A 323-amino-acid chain; its full sequence is o-succinylbenzoate synthase (323 aa).

The Proton donor role is filled by K134. The Mg(2+) site is built by D162, E191, and D214. The active-site Proton acceptor is the K236.

Belongs to the mandelate racemase/muconate lactonizing enzyme family. MenC type 1 subfamily. It depends on a divalent metal cation as a cofactor.

It carries out the reaction (1R,6R)-6-hydroxy-2-succinyl-cyclohexa-2,4-diene-1-carboxylate = 2-succinylbenzoate + H2O. The protein operates within quinol/quinone metabolism; 1,4-dihydroxy-2-naphthoate biosynthesis; 1,4-dihydroxy-2-naphthoate from chorismate: step 4/7. It participates in quinol/quinone metabolism; menaquinone biosynthesis. In terms of biological role, converts 2-succinyl-6-hydroxy-2,4-cyclohexadiene-1-carboxylate (SHCHC) to 2-succinylbenzoate (OSB). The sequence is that of o-succinylbenzoate synthase from Yersinia pseudotuberculosis serotype O:1b (strain IP 31758).